The following is a 763-amino-acid chain: Glycerophosphodiester phosphodiesterase GDPDL1 (763 aa).

An N-terminal signal peptide occupies residues 1 to 35; sequence MNSRPSNPTKLVIRSSTLLFCGVVLIHLFAAQIDA. The Extracellular segment spans residues 36–744; sequence QRSTSRWQTL…STIAQAPSGQ (709 aa). A GP-PDE 1 domain is found at 50-350; the sequence is PLVIARGGFS…DFPITASAAV (301 aa). N105, N192, N248, N257, N315, N359, N430, N534, N547, and N654 each carry an N-linked (GlcNAc...) asparagine glycan. Residues 366 to 668 form the GP-PDE 2 domain; the sequence is FLVISKDGAS…EFPFTAARYK (303 aa). The chain crosses the membrane as a helical span at residues 745 to 762; it reads TRLKLSLLLSVFFLSLLL. Residue L763 is a topological domain, cytoplasmic.

This sequence belongs to the glycerophosphoryl diester phosphodiesterase family. Requires Ca(2+) as cofactor. Expressed in rosette and cauline leaves, stems, flowers and siliques.

The protein resides in the cell membrane. It carries out the reaction a sn-glycero-3-phosphodiester + H2O = an alcohol + sn-glycerol 3-phosphate + H(+). Hydrolyzes glycerolphosphoglycerol, glycerophosphocholine and glycerophosphoethanolamine in vitro. This is Glycerophosphodiester phosphodiesterase GDPDL1 from Arabidopsis thaliana (Mouse-ear cress).